The primary structure comprises 147 residues: Myoglobin (147 aa).

One can recognise a Globin domain in the interval 2–141 (ADFDAVLKCW…IIADLEANYK (140 aa)). H60 contributes to the nitrite binding site. Residue H60 coordinates O2. A heme b-binding site is contributed by H89.

It belongs to the globin family. As to quaternary structure, monomeric.

It localises to the cytoplasm. It is found in the sarcoplasm. The catalysed reaction is Fe(III)-heme b-[protein] + nitric oxide + H2O = Fe(II)-heme b-[protein] + nitrite + 2 H(+). It catalyses the reaction H2O2 + AH2 = A + 2 H2O. Monomeric heme protein which primary function is to store oxygen and facilitate its diffusion within muscle tissues. Reversibly binds oxygen through a pentacoordinated heme iron and enables its timely and efficient release as needed during periods of heightened demand. Depending on the oxidative conditions of tissues and cells, and in addition to its ability to bind oxygen, it also has a nitrite reductase activity whereby it regulates the production of bioactive nitric oxide. Under stress conditions, like hypoxia and anoxia, it also protects cells against reactive oxygen species thanks to its pseudoperoxidase activity. The protein is Myoglobin (mb) of Thunnus obesus (Bigeye tuna).